Consider the following 762-residue polypeptide: Phosphoribosylformylglycinamidine synthase subunit PurL (762 aa).

His-58 is a catalytic residue. ATP contacts are provided by Tyr-61 and Lys-105. Position 107 (Glu-107) interacts with Mg(2+). Substrate-binding positions include 108–111 and Arg-130; that span reads SHNH. His-109 functions as the Proton acceptor in the catalytic mechanism. Asp-131 provides a ligand contact to Mg(2+). Substrate is bound at residue Gln-260. Asp-288 provides a ligand contact to Mg(2+). A substrate-binding site is contributed by 332 to 334; it reads ESQ. ATP contacts are provided by Asn-520 and Gly-557. Asn-558 lines the Mg(2+) pocket. Residue Ser-560 participates in substrate binding.

The protein belongs to the FGAMS family. As to quaternary structure, monomer. Part of the FGAM synthase complex composed of 1 PurL, 1 PurQ and 2 PurS subunits.

It localises to the cytoplasm. It carries out the reaction N(2)-formyl-N(1)-(5-phospho-beta-D-ribosyl)glycinamide + L-glutamine + ATP + H2O = 2-formamido-N(1)-(5-O-phospho-beta-D-ribosyl)acetamidine + L-glutamate + ADP + phosphate + H(+). It functions in the pathway purine metabolism; IMP biosynthesis via de novo pathway; 5-amino-1-(5-phospho-D-ribosyl)imidazole from N(2)-formyl-N(1)-(5-phospho-D-ribosyl)glycinamide: step 1/2. Part of the phosphoribosylformylglycinamidine synthase complex involved in the purines biosynthetic pathway. Catalyzes the ATP-dependent conversion of formylglycinamide ribonucleotide (FGAR) and glutamine to yield formylglycinamidine ribonucleotide (FGAM) and glutamate. The FGAM synthase complex is composed of three subunits. PurQ produces an ammonia molecule by converting glutamine to glutamate. PurL transfers the ammonia molecule to FGAR to form FGAM in an ATP-dependent manner. PurS interacts with PurQ and PurL and is thought to assist in the transfer of the ammonia molecule from PurQ to PurL. This is Phosphoribosylformylglycinamidine synthase subunit PurL from Rhodococcus erythropolis (strain PR4 / NBRC 100887).